A 160-amino-acid chain; its full sequence is Protransforming growth factor alpha (160 aa).

An N-terminal signal peptide occupies residues 1 to 23 (MVPSAGQLALFALGIVLAACQAL). A propeptide spans 24 to 39 (ENSTSPLSADPPVAAA) (removed in mature form). The Extracellular portion of the chain corresponds to 24–98 (ENSTSPLSAD…AVVAASQKKQ (75 aa)). An N-linked (GlcNAc...) asparagine glycan is attached at Asn-25. In terms of domain architecture, EGF-like spans 43-83 (HFNDCPDSHTQFCFHGTCRFLVQEDKPACVCHSGYVGARCE). 3 cysteine pairs are disulfide-bonded: Cys-47–Cys-60, Cys-55–Cys-71, and Cys-73–Cys-82. Positions 90–160 (VVAASQKKQA…TACCHSETVV (71 aa)) are cleaved as a propeptide — removed in mature form. Residues 99-124 (AITALVVVSIVALAVLIITCVLIHCC) traverse the membrane as a helical segment. The Cytoplasmic portion of the chain corresponds to 125-160 (QVRKHCEWCRALICRHEKPSALLKGRTACCHSETVV). 2 S-palmitoyl cysteine lipidation sites follow: Cys-153 and Cys-154.

In terms of assembly, interacts with the PDZ domains of MAGI3, SDCBP and SNTA1. The interaction with SDCBP, is required for the targeting to the cell surface. In the endoplasmic reticulum, in its immature form (i.e. with a prosegment and lacking full N-glycosylation), interacts with CNIH. In the Golgi apparatus, may form a complex with CNIH and GORASP2. Interacts (via cytoplasmic C-terminal domain) with NKD2. Isoform 1, isoform 3 and isoform 4 are expressed in keratinocytes and tumor-derived cell lines.

The protein localises to the secreted. Its subcellular location is the extracellular space. It is found in the cell membrane. Its function is as follows. TGF alpha is a mitogenic polypeptide that is able to bind to the EGF receptor/EGFR and to act synergistically with TGF beta to promote anchorage-independent cell proliferation in soft agar. The polypeptide is Protransforming growth factor alpha (TGFA) (Homo sapiens (Human)).